Reading from the N-terminus, the 339-residue chain is Phenylalanine--tRNA ligase alpha subunit (339 aa).

E254 serves as a coordination point for Mg(2+).

Belongs to the class-II aminoacyl-tRNA synthetase family. Phe-tRNA synthetase alpha subunit type 1 subfamily. As to quaternary structure, tetramer of two alpha and two beta subunits. It depends on Mg(2+) as a cofactor.

Its subcellular location is the cytoplasm. It catalyses the reaction tRNA(Phe) + L-phenylalanine + ATP = L-phenylalanyl-tRNA(Phe) + AMP + diphosphate + H(+). The chain is Phenylalanine--tRNA ligase alpha subunit from Clostridium beijerinckii (strain ATCC 51743 / NCIMB 8052) (Clostridium acetobutylicum).